Here is a 370-residue protein sequence, read N- to C-terminus: Aminomethyltransferase (370 aa).

The protein belongs to the GcvT family. The glycine cleavage system is composed of four proteins: P, T, L and H.

It catalyses the reaction N(6)-[(R)-S(8)-aminomethyldihydrolipoyl]-L-lysyl-[protein] + (6S)-5,6,7,8-tetrahydrofolate = N(6)-[(R)-dihydrolipoyl]-L-lysyl-[protein] + (6R)-5,10-methylene-5,6,7,8-tetrahydrofolate + NH4(+). Functionally, the glycine cleavage system catalyzes the degradation of glycine. The sequence is that of Aminomethyltransferase from Clostridium botulinum (strain Kyoto / Type A2).